The following is a 375-amino-acid chain: 3-dehydroquinate synthase (375 aa).

Residues Ser82–Lys87, Gly116–Asp120, Thr140–Thr141, Lys153, and Lys162 each bind NAD(+). Zn(2+)-binding residues include Glu195, His259, and His276.

Belongs to the sugar phosphate cyclases superfamily. Dehydroquinate synthase family. Requires NAD(+) as cofactor. Co(2+) is required as a cofactor. The cofactor is Zn(2+).

It is found in the cytoplasm. The catalysed reaction is 7-phospho-2-dehydro-3-deoxy-D-arabino-heptonate = 3-dehydroquinate + phosphate. It functions in the pathway metabolic intermediate biosynthesis; chorismate biosynthesis; chorismate from D-erythrose 4-phosphate and phosphoenolpyruvate: step 2/7. Catalyzes the conversion of 3-deoxy-D-arabino-heptulosonate 7-phosphate (DAHP) to dehydroquinate (DHQ). This chain is 3-dehydroquinate synthase, found in Rhodopirellula baltica (strain DSM 10527 / NCIMB 13988 / SH1).